Reading from the N-terminus, the 218-residue chain is N-(5'-phosphoribosyl)anthranilate isomerase (218 aa).

The protein belongs to the TrpF family.

It carries out the reaction N-(5-phospho-beta-D-ribosyl)anthranilate = 1-(2-carboxyphenylamino)-1-deoxy-D-ribulose 5-phosphate. It functions in the pathway amino-acid biosynthesis; L-tryptophan biosynthesis; L-tryptophan from chorismate: step 3/5. The chain is N-(5'-phosphoribosyl)anthranilate isomerase from Stenotrophomonas maltophilia (strain K279a).